Consider the following 341-residue polypeptide: 4-hydroxy-2-oxovalerate aldolase 2 (341 aa).

Positions 8–260 (VTVHDMTLRD…ETGVDVAKIT (253 aa)) constitute a Pyruvate carboxyltransferase domain. A substrate-binding site is contributed by 16-17 (RD). Asp17 provides a ligand contact to Mn(2+). Residue His20 is the Proton acceptor of the active site. The substrate site is built by Ser170 and His199. Residues His199 and His201 each coordinate Mn(2+). Residue Tyr290 coordinates substrate.

It belongs to the 4-hydroxy-2-oxovalerate aldolase family.

The enzyme catalyses (S)-4-hydroxy-2-oxopentanoate = acetaldehyde + pyruvate. The polypeptide is 4-hydroxy-2-oxovalerate aldolase 2 (Dechloromonas aromatica (strain RCB)).